The following is a 1233-amino-acid chain: MATEPNEINLRMTQTRMKQIEDTTFKIRRKHDDMYTYLINDIEATEMYPDTETPFRMKSSLNNTYIQVKCQIPKLIMQPPLYNNDMYPLNHNSTNFLEDRPFNYLCNFDWFEFLSRSKDELGMHYNMIRDLISMSSQTRYSNIWSNISGIIMYLRQYKRGFALRSILIRLLTYWNNFPFFDTWDGFKDVLPKTSTAWPLLFYAFMSVAFDYICENISEGDAIVCFQNHLENAQISYQDTKLEKKNGYTLWLKYECHNLRVALTPRYDYTGTVYGNFLKDTTEYIITDEFEENEIKMKNILNPSFYKILQQLRREIKTVEDIIRLLTICYSARDDRTYYGTLMELAISKAIKPQVAGSIVPKPIPTSWLQKDPKIVLSAKYPSTSFLSQMQEFYRRYYPALQREIDVHALSASFINFLSTASAGVGIELPEEIINMVKDKRLLYLLKKGSGKRVLQEALLVERYNDLDPIINDFVRLIKIVVRKQIERRQRGIAGIPNNVLKINQVTYEANKPFSKIARAPSHGKQSGNASDIHDLLFYTTQEDVSHIEVNGKRQMRGIVISSADVKGMDTHIQINAAMNQHLGAIEILDGIQYDVGPFRQTRAVIQDIQGNVYERNLNGGQQAIAFGLANFSQTTGINSKYFGQIPNQEGTFPSGLITTSNHHTQMLTLLIETAATTFTNEFGKSIAIAHLMILGDDVSLMLHGNDKDVNFFMKYLVEKFSQLGLILERDESRNFGVFLQQHVINGRFNGFSNRIAIFTSEDYKTRKSVQESCTEYNALIDDVIFRTYNVRKLLQFQRIHQFVVLSKYIFRVQNYKYEKLKAKLATRLNVFEYDLKPHNDSRENVQNQNMLRFIGIQIPYTYFQCSGGGEIPPESFQRKDGSFTYEYSIYSPKGKWLRKFLYDISCTIDEPKFRIDDEIMRMYNLDICDFLIQYNMLNIQEEIRATIIDRELISKLAMNLESLENSNARMISRRASESLRIMGIKLPANGVYGYQINERLVKVLQNIQQSDYEVKMVGDALFTAIMEKFDSHKVRMEKGDRLHNFTLDFSDKSDRLVINKKMIALHNISISKNMAPYSDAWMLYTCLNHTYNASSELSTALAHSQGHFKSFQYDRDMFAESVKIASKHGIGSLPMELFFEASNIRDSAQLKWIEAIKYYIQFKDYLYPYSINPRRLFFIPEQVSSVSSLLNQDNIPADANKKALMFRRAYAYVLSHPFRISGAKAIFVDDRIS.

The 775-residue stretch at 1–775 (MATEPNEINL…RKSVQESCTE (775 aa)) folds into the RdRp catalytic domain.

Belongs to the reoviridae RNA-directed RNA polymerase family. Interacts with VP6.

The enzyme catalyses RNA(n) + a ribonucleoside 5'-triphosphate = RNA(n+1) + diphosphate. Its function is as follows. RNA-directed RNA polymerase that is involved in transcription and genome replication. Following infection, it catalyzes the synthesis of fully conservative plus strands. After core assembly, which consists in recruitment of one capped plus-strand for each genomic segments and polymerase complexes, the polymerase switches mode and catalyzes the synthesis of complementary minus-strands. The protein is RNA-directed RNA polymerase VP2 (S2) of Aedes pseudoscutellaris (Mosquito).